The following is a 390-amino-acid chain: Alanine racemase (390 aa).

Catalysis depends on Lys37, which acts as the Proton acceptor; specific for D-alanine. Lys37 bears the N6-(pyridoxal phosphate)lysine mark. Substrate is bound at residue Arg135. The active-site Proton acceptor; specific for L-alanine is Tyr274. Substrate is bound at residue Met322.

Belongs to the alanine racemase family. Pyridoxal 5'-phosphate is required as a cofactor.

The enzyme catalyses L-alanine = D-alanine. It participates in amino-acid biosynthesis; D-alanine biosynthesis; D-alanine from L-alanine: step 1/1. Functionally, catalyzes the interconversion of L-alanine and D-alanine. May also act on other amino acids. This Desulfosudis oleivorans (strain DSM 6200 / JCM 39069 / Hxd3) (Desulfococcus oleovorans) protein is Alanine racemase (alr).